Consider the following 126-residue polypeptide: Histone H2B type 1-K (126 aa).

Over residues 1–12 (MPEPAKSAPAPK) the composition is skewed to low complexity. The interval 1 to 36 (MPEPAKSAPAPKKGSKKAVTKAQKKDGKKRKRSRKE) is disordered. Residue Pro2 is modified to N-acetylproline. Glu3 is modified (ADP-ribosyl glutamic acid). Lys6 is subject to N6-(2-hydroxyisobutyryl)lysine; alternate. Residue Lys6 is modified to N6-(beta-hydroxybutyryl)lysine; alternate. Lys6 carries the post-translational modification N6-acetyllysine; alternate. The residue at position 6 (Lys6) is an N6-butyryllysine; alternate. Lys6 is modified (N6-crotonyllysine; alternate). Position 6 is an N6-lactoyllysine; alternate (Lys6). Lys6 participates in a covalent cross-link: Glycyl lysine isopeptide (Lys-Gly) (interchain with G-Cter in SUMO2); alternate. ADP-ribosylserine is present on Ser7. At Lys12 the chain carries N6-(beta-hydroxybutyryl)lysine; alternate. An N6-acetyllysine; alternate mark is found at Lys12 and Lys13. N6-crotonyllysine; alternate occurs at positions 12 and 13. Lys12 is modified (N6-lactoyllysine; alternate). Residue Lys13 is modified to N6-(2-hydroxyisobutyryl)lysine; alternate. Ser15 is modified (phosphoserine; by STK4/MST1). Lys16, Lys17, Lys21, and Lys24 each carry N6-acetyllysine; alternate. N6-crotonyllysine; alternate is present on residues Lys16, Lys17, Lys21, and Lys24. An N6-lactoyllysine; alternate mark is found at Lys16, Lys17, Lys21, and Lys24. Lys17 bears the N6-glutaryllysine; alternate mark. N6-(2-hydroxyisobutyryl)lysine; alternate is present on residues Lys21 and Lys24. The residue at position 21 (Lys21) is an N6-(beta-hydroxybutyryl)lysine; alternate. Lys21 is subject to N6-butyryllysine; alternate. Lys21 participates in a covalent cross-link: Glycyl lysine isopeptide (Lys-Gly) (interchain with G-Cter in SUMO2); alternate. The residue at position 25 (Lys25) is an N6-(2-hydroxyisobutyryl)lysine. Position 35 is an N6-(2-hydroxyisobutyryl)lysine; alternate (Lys35). Lys35 bears the N6-(beta-hydroxybutyryl)lysine; alternate mark. N6-crotonyllysine; alternate is present on Lys35. N6-glutaryllysine; alternate is present on Lys35. Lys35 is subject to N6-succinyllysine; alternate. Lys35 participates in a covalent cross-link: Glycyl lysine isopeptide (Lys-Gly) (interchain with G-Cter in ubiquitin); alternate. A PolyADP-ribosyl glutamic acid modification is found at Glu36. Ser37 is subject to Phosphoserine; by AMPK. An N6-(2-hydroxyisobutyryl)lysine; alternate mark is found at Lys44, Lys47, and Lys58. The residue at position 44 (Lys44) is an N6-lactoyllysine; alternate. Residues Lys44 and Lys47 each carry the N6-glutaryllysine; alternate modification. Residue Lys47 is modified to N6-methyllysine; alternate. The residue at position 58 (Lys58) is an N6,N6-dimethyllysine; alternate. Arg80 bears the Dimethylated arginine mark. The residue at position 86 (Lys86) is an N6-(2-hydroxyisobutyryl)lysine; alternate. Lys86 carries the post-translational modification N6-acetyllysine; alternate. Lys86 carries the N6-lactoyllysine; alternate modification. Lys86 bears the N6,N6,N6-trimethyllysine; alternate mark. Residues Arg87 and Arg93 each carry the omega-N-methylarginine modification. N6-(2-hydroxyisobutyryl)lysine; alternate is present on Lys109. Position 109 is an N6-(beta-hydroxybutyryl)lysine; alternate (Lys109). Lys109 is subject to N6-lactoyllysine; alternate. N6-glutaryllysine; alternate is present on Lys109. Position 109 is an N6-methyllysine; alternate (Lys109). Ser113 is a glycosylation site (O-linked (GlcNAc) serine). The residue at position 116 (Thr116) is a Phosphothreonine. Residues Lys117 and Lys121 each carry the N6-(2-hydroxyisobutyryl)lysine; alternate modification. The residue at position 117 (Lys117) is an N6-(beta-hydroxybutyryl)lysine; alternate. Lys117 and Lys121 each carry N6-lactoyllysine; alternate. N6-glutaryllysine; alternate is present on residues Lys117 and Lys121. An N6-succinyllysine; alternate mark is found at Lys117 and Lys121. Lys117 bears the N6-methylated lysine; alternate mark. A Glycyl lysine isopeptide (Lys-Gly) (interchain with G-Cter in ubiquitin); alternate cross-link involves residue Lys121.

It belongs to the histone H2B family. In terms of assembly, the nucleosome is a histone octamer containing two molecules each of H2A, H2B, H3 and H4 assembled in one H3-H4 heterotetramer and two H2A-H2B heterodimers. The octamer wraps approximately 147 bp of DNA. In terms of processing, monoubiquitination at Lys-35 (H2BK34Ub) by the MSL1/MSL2 dimer is required for histone H3 'Lys-4' (H3K4me) and 'Lys-79' (H3K79me) methylation and transcription activation at specific gene loci, such as HOXA9 and MEIS1 loci. Similarly, monoubiquitination at Lys-121 (H2BK120Ub) by the RNF20/40 complex gives a specific tag for epigenetic transcriptional activation and is also prerequisite for histone H3 'Lys-4' and 'Lys-79' methylation. It also functions cooperatively with the FACT dimer to stimulate elongation by RNA polymerase II. H2BK120Ub also acts as a regulator of mRNA splicing: deubiquitination by USP49 is required for efficient cotranscriptional splicing of a large set of exons. Post-translationally, phosphorylated on Ser-15 (H2BS14ph) by STK4/MST1 during apoptosis; which facilitates apoptotic chromatin condensation. Also phosphorylated on Ser-15 in response to DNA double strand breaks (DSBs), and in correlation with somatic hypermutation and immunoglobulin class-switch recombination. Phosphorylation at Ser-37 (H2BS36ph) by AMPK in response to stress promotes transcription. GlcNAcylation at Ser-113 promotes monoubiquitination of Lys-121. It fluctuates in response to extracellular glucose, and associates with transcribed genes. In terms of processing, ADP-ribosylated by PARP1 or PARP2 on Ser-7 (H2BS6ADPr) in response to DNA damage. H2BS6ADPr promotes recruitment of CHD1L. Mono-ADP-ribosylated on Glu-3 (H2BE2ADPr) by PARP3 in response to single-strand breaks. Poly ADP-ribosylation on Glu-36 (H2BE35ADPr) by PARP1 regulates adipogenesis: it inhibits phosphorylation at Ser-37 (H2BS36ph), thereby blocking expression of pro-adipogenetic genes. Post-translationally, crotonylation (Kcr) is specifically present in male germ cells and marks testis-specific genes in post-meiotic cells, including X-linked genes that escape sex chromosome inactivation in haploid cells. Crotonylation marks active promoters and enhancers and confers resistance to transcriptional repressors. It is also associated with post-meiotically activated genes on autosomes. Hydroxybutyrylation of histones is induced by starvation. In terms of processing, lactylated in macrophages by EP300/P300 by using lactoyl-CoA directly derived from endogenous or exogenous lactate, leading to stimulates gene transcription.

The protein resides in the nucleus. Its subcellular location is the chromosome. In terms of biological role, core component of nucleosome. Nucleosomes wrap and compact DNA into chromatin, limiting DNA accessibility to the cellular machineries which require DNA as a template. Histones thereby play a central role in transcription regulation, DNA repair, DNA replication and chromosomal stability. DNA accessibility is regulated via a complex set of post-translational modifications of histones, also called histone code, and nucleosome remodeling. The chain is Histone H2B type 1-K from Mus musculus (Mouse).